A 236-amino-acid polypeptide reads, in one-letter code: Dolichol-phosphate mannosyltransferase (236 aa).

Residues Pro9, Tyr11, Glu13, Ile40, Asp42, Asp95, Ala96, Asp97, Arg124, Val160, Arg211, and Lys217 each coordinate GDP-alpha-D-mannose. Asp97 provides a ligand contact to Mg(2+). A Mn(2+)-binding site is contributed by Asp97.

Belongs to the glycosyltransferase 2 family. In terms of assembly, component of the dolichol-phosphate mannose (DPM) synthase complex composed of dpm1, dpm2 and dpm3. Requires Mg(2+) as cofactor. Mn(2+) is required as a cofactor. The cofactor is Ca(2+).

The protein resides in the endoplasmic reticulum. It carries out the reaction a di-trans,poly-cis-dolichyl phosphate + GDP-alpha-D-mannose = a di-trans,poly-cis-dolichyl beta-D-mannosyl phosphate + GDP. The protein operates within protein modification; protein glycosylation. Its function is as follows. Transfers mannose from GDP-mannose to dolichol monophosphate to form dolichol phosphate mannose (Dol-P-Man) which is the mannosyl donor in pathways leading to N-glycosylation, glycosyl phosphatidylinositol membrane anchoring, and O-mannosylation of proteins. This Schizosaccharomyces pombe (strain 972 / ATCC 24843) (Fission yeast) protein is Dolichol-phosphate mannosyltransferase.